The primary structure comprises 517 residues: Cytochrome P450 CYP72A616 (517 aa).

The helical transmembrane segment at 5–25 threads the bilayer; sequence VLGALAALLAAAAAWVMRAAA. Heme is bound at residue Cys-465.

The protein belongs to the cytochrome P450 family. As to expression, mainly expressed in leaves and, at low levels, in roots, fruits and stems.

Its subcellular location is the membrane. It participates in steroid metabolism; cholesterol metabolism. Involved in the biosynthesis of spiroketal steroid and saponin natural products from cholesterol such as diosgenin and analogs (e.g. furostanol and spirostanol), plant defense compounds used as main precursors for the industrial production of steroid hormones. During the 5,6-spiroketalization of cholesterol, may catalyze the 27-monohydroxylation of furostanol-type steroid to an intermediate product that undergoes a stereospecific formation of the terminal heterocycle to yield diosgenin. This chain is Cytochrome P450 CYP72A616, found in Paris polyphylla (Daiswa polyphylla).